The sequence spans 663 residues: DNA ligase (663 aa).

Residues 31-35 (DSEYD), 80-81 (SL), and E109 contribute to the NAD(+) site. K111 (N6-AMP-lysine intermediate) is an active-site residue. NAD(+) contacts are provided by R132, E166, K282, and K306. Residues C400, C403, C418, and C423 each contribute to the Zn(2+) site. Residues 585-663 (ELHPVFGEKT…EQMMVDALRN (79 aa)) enclose the BRCT domain.

Belongs to the NAD-dependent DNA ligase family. LigA subfamily. Requires Mg(2+) as cofactor. The cofactor is Mn(2+).

It catalyses the reaction NAD(+) + (deoxyribonucleotide)n-3'-hydroxyl + 5'-phospho-(deoxyribonucleotide)m = (deoxyribonucleotide)n+m + AMP + beta-nicotinamide D-nucleotide.. Functionally, DNA ligase that catalyzes the formation of phosphodiester linkages between 5'-phosphoryl and 3'-hydroxyl groups in double-stranded DNA using NAD as a coenzyme and as the energy source for the reaction. It is essential for DNA replication and repair of damaged DNA. This chain is DNA ligase, found in Macrococcus caseolyticus (strain JCSC5402) (Macrococcoides caseolyticum).